A 402-amino-acid polypeptide reads, in one-letter code: Phosphoglycerate kinase (402 aa).

Substrate is bound by residues aspartate 24 to asparagine 26, arginine 39, histidine 62 to arginine 65, arginine 121, and arginine 161. ATP contacts are provided by residues lysine 211, glycine 299, glutamate 330, and glycine 359–serine 362.

The protein belongs to the phosphoglycerate kinase family. As to quaternary structure, monomer.

It is found in the cytoplasm. It catalyses the reaction (2R)-3-phosphoglycerate + ATP = (2R)-3-phospho-glyceroyl phosphate + ADP. Its pathway is carbohydrate degradation; glycolysis; pyruvate from D-glyceraldehyde 3-phosphate: step 2/5. The protein is Phosphoglycerate kinase of Corynebacterium urealyticum (strain ATCC 43042 / DSM 7109).